A 284-amino-acid chain; its full sequence is Sulfotransferase 4A1 (284 aa).

3 positions are modified to phosphothreonine: Thr-8, Thr-11, and Thr-205.

The protein belongs to the sulfotransferase 1 family. In terms of tissue distribution, highly expressed in the cerebral cortex and frontal lobe, slightly less in the cerebellum, occipital and temporal lobes, relatively low in the medulla and putamen, and lowest in the spinal cord. No expression detected in the pancreas. Highly expressed in fetal brain and occipital lobe, slightly less in the whole brain, frontal lobe, hippocampus, and lung, very low expression in cerebellum, medulla oblongata, temporal lobe, testis, kidney and appendix.

Its subcellular location is the cytoplasm. In terms of biological role, atypical sulfotransferase family member with very low affinity for 3'-phospho-5'-adenylyl sulfate (PAPS) and very low catalytic activity towards L-triiodothyronine, thyroxine, estrone, p-nitrophenol, 2-naphthylamine, and 2-beta-naphthol. May have a role in the metabolism of drugs and neurotransmitters in the CNS. This is Sulfotransferase 4A1 (SULT4A1) from Homo sapiens (Human).